A 517-amino-acid polypeptide reads, in one-letter code: Probable G-protein coupled receptor Mth-like 4 (517 aa).

Residues 1–18 (MRILLIAVLFLLMPKSNA) form the signal peptide. The Extracellular segment spans residues 19–212 (EIPGCDFFDT…LSSEHSRTWK (194 aa)). Cystine bridges form between Cys-23–Cys-77, Cys-79–Cys-84, Cys-88–Cys-183, Cys-89–Cys-100, and Cys-145–Cys-201. Asn-39 carries an N-linked (GlcNAc...) asparagine glycan. N-linked (GlcNAc...) asparagine glycosylation is found at Asn-117 and Asn-165. The chain crosses the membrane as a helical span at residues 213–233 (TVAIVISLICIILTISVYLYV). The Cytoplasmic portion of the chain corresponds to 234-242 (EKLRNLHGK). The chain crosses the membrane as a helical span at residues 243–263 (CFICYLASLFLGYFFLVLNVW). Over 264-272 (KYSSGFCVT) the chain is Extracellular. Residues 273 to 293 (AGFLGYFSVMAAFFWLSVIGI) form a helical membrane-spanning segment. Residues 294-319 (HLRIKFSLASNCLHRLLPENPFRAYN) are Cytoplasmic-facing. The helical transmembrane segment at 320-340 (LYAWGIPLIMTAITYTADQVV) threads the bilayer. The Extracellular portion of the chain corresponds to 341–363 (KNEKLRPRVGVGKNCWIYTGDMT). The helical transmembrane segment at 364–384 (VMIYFYGPMLLLIAFNIIMFV) threads the bilayer. The Cytoplasmic portion of the chain corresponds to 385-414 (LSAIYIYNIKKNVKGLVHKQQTNQQINDQQ). A helical membrane pass occupies residues 415–435 (MFAIFLRLFILMGLSWSFEIL). Topologically, residues 436-459 (SFLLTKQQAWARALMVADYFNWSQ) are extracellular. The N-linked (GlcNAc...) asparagine glycan is linked to Asn-456. A helical membrane pass occupies residues 460–480 (GTIIFVLFILKPSILKLIIAG). Residues 481 to 517 (GRQNLPGSHHNSRSKAARYNSTHTACEGSIADPNAYC) are Cytoplasmic-facing.

It belongs to the G-protein coupled receptor 2 family. Mth subfamily.

The protein resides in the cell membrane. The sequence is that of Probable G-protein coupled receptor Mth-like 4 (mthl4) from Drosophila melanogaster (Fruit fly).